Here is a 796-residue protein sequence, read N- to C-terminus: Peroxisome proliferator-activated receptor gamma coactivator 1-alpha (796 aa).

At Lys77 the chain carries N6-acetyllysine. The tract at residues Pro98–Glu138 is disordered. Positions Asp114–Pro127 are enriched in polar residues. The LXXLL motif signature appears at Leu142–Leu146. Residue Lys144 is modified to N6-acetyllysine. Residue Thr176 is modified to Phosphothreonine; by AMPK. N6-acetyllysine is present on Lys182. The disordered stretch occupies residues Tyr211–Asn275. Positions Asp217–Thr235 are enriched in basic and acidic residues. Residues Thr242–Leu258 are compositionally biased toward polar residues. N6-acetyllysine is present on residues Lys252, Lys269, Lys276, and Lys319. Disordered regions lie at residues Gly288 to Pro374 and Thr398 to Leu452. Positions Gly291–Thr337 are interaction with PPARG. Positions Ser332 to Lys344 are enriched in polar residues. 2 positions are modified to N6-acetyllysine: Lys345 and Lys411. The mediates interaction with RNF34 stretch occupies residues Glu348–Arg796. Over residues Glu401–Asp412 the composition is skewed to basic and acidic residues. 2 stretches are compositionally biased toward polar residues: residues Ala413 to Ser428 and Val439 to Lys450. Residue Lys450 is modified to N6-acetyllysine. Residue Ser538 is modified to Phosphoserine; by AMPK. 3 disordered regions span residues Phe542–Arg597, His609–Glu637, and Tyr648–Arg667. A compositionally biased stretch (basic residues) spans Gln562–Cys577. The span at Ser578 to Arg597 shows a compositional bias: low complexity. In terms of domain architecture, RRM spans Arg675–Arg751. Lys756 and Lys777 each carry N6-acetyllysine.

As to quaternary structure, homooligomer. Interacts with MYBBP1A; inhibits MYBBP1A transcriptional activation. Interacts with PRDM16, LPIN1 and PML. Interacts (via LXXLL motif) with RORA and RORC (via AF-2 motif); activates RORA and RORC transcriptional activation. Interacts with LRPPRC. Interacts with FOXO1. Interacts with NR5A2. Phosphorylation by AMPK in skeletal muscle increases activation of its own promoter. Phosphorylated by CLK2. In terms of processing, heavily acetylated by KAT2A/GCN5 under conditions of high nutrients, leading to inactivation of PPARGC1A. Deacetylated by SIRT1 in low nutrients/high NAD conditions, leading to its activation. Post-translationally, ubiquitinated. Ubiquitination by RNF34 induces proteasomal degradation.

The protein resides in the nucleus. It localises to the PML body. Functionally, transcriptional coactivator for steroid receptors and nuclear receptors. Greatly increases the transcriptional activity of PPARG and thyroid hormone receptor on the uncoupling protein promoter. Can regulate key mitochondrial genes that contribute to the program of adaptive thermogenesis. Plays an essential role in metabolic reprogramming in response to dietary availability through coordination of the expression of a wide array of genes involved in glucose and fatty acid metabolism. Acts as a key regulator of gluconeogenesis: stimulates hepatic gluconeogenesis by increasing the expression of gluconeogenic enzymes, and acting together with FOXO1 to promote the fasting gluconeogenic program. Induces the expression of PERM1 in the skeletal muscle in an ESRRA-dependent manner. Also involved in the integration of the circadian rhythms and energy metabolism. Required for oscillatory expression of clock genes, such as BMAL1 and NR1D1, through the coactivation of RORA and RORC, and metabolic genes, such as PDK4 and PEPCK. The protein is Peroxisome proliferator-activated receptor gamma coactivator 1-alpha (PPARGC1A) of Bos taurus (Bovine).